The chain runs to 86 residues: MTRFVLFLSCFFLIGMVVECKDGYLVGDDGCKMHCFTRPGHYCASECSRVKGKDGYCYAWLACYCYNMPNWAPIWNSATNRCRGRK.

The N-terminal stretch at 1–20 (MTRFVLFLSCFFLIGMVVEC) is a signal peptide. Residues 21 to 83 (KDGYLVGDDG…IWNSATNRCR (63 aa)) enclose the LCN-type CS-alpha/beta domain. 4 disulfides stabilise this stretch: C31–C82, C35–C57, C43–C63, and C47–C65. An Arginine amide modification is found at R83.

As to expression, expressed by the venom gland.

The protein resides in the secreted. Functionally, beta toxins bind voltage-independently at site-4 of sodium channels (Nav) and shift the voltage of activation toward more negative potentials thereby affecting sodium channel activation and promoting spontaneous and repetitive firing. This Tityus discrepans (Venezuelan scorpion) protein is Toxin Td8.